The following is a 701-amino-acid chain: Lutropin-choriogonadotropic hormone receptor (701 aa).

Positions 1 to 26 are cleaved as a signal peptide; it reads MGRPSLALRLLLALLLLPPPAPLLWA. At 27–365 the chain is on the extracellular side; the sequence is LRPAPCPEPC…EDIMGYNFLR (339 aa). N-linked (GlcNAc...) asparagine glycosylation is present at asparagine 101. LRR repeat units follow at residues 124–149, 151–173, 174–198, 200–222, 223–246, and 250–271; these read LPRL…IFSS, FNFI…AFQG, MNNE…AFNG, TLIS…AFRG, ATGP…GLES, and LIAT…TNLL. Residues asparagine 176 and asparagine 197 are each glycosylated (N-linked (GlcNAc...) asparagine). N-linked (GlcNAc...) asparagine glycosylation is found at asparagine 293, asparagine 301, and asparagine 315. Residue tyrosine 333 is modified to Sulfotyrosine. Residues 366 to 387 form a helical membrane-spanning segment; that stretch reads VLIWLINILAITGNVTVLFVLL. The Cytoplasmic segment spans residues 388–397; that stretch reads TSRYKLTVPR. A helical transmembrane segment spans residues 398-418; the sequence is FLMCNLSFADFCMGLYLLLIA. The Extracellular segment spans residues 419 to 441; the sequence is SVDAQTKGQYYNHAIDWQTGSGC. An intrachain disulfide couples cysteine 441 to cysteine 516. Residues 442–464 form a helical membrane-spanning segment; that stretch reads SAAGFFTVFASELSVYTLTVITL. The Cytoplasmic portion of the chain corresponds to 465 to 484; that stretch reads ERWHTITYAIQLDQKLRLKH. Residues 485 to 507 form a helical membrane-spanning segment; that stretch reads AIPVMLGGWLFSTLIAVLPLVGV. At 508-527 the chain is on the extracellular side; sequence SNYMKVSICLPMDVESTLSQ. Residues 528–551 traverse the membrane as a helical segment; sequence VYILTILILNVMAFIIICACYIKI. Over 552–572 the chain is Cytoplasmic; the sequence is YFAVQNPELMATNKDTKIAKK. A helical membrane pass occupies residues 573 to 596; that stretch reads MAVLIFTDFTCMAPISFFAISAAF. Topologically, residues 597 to 607 are extracellular; sequence KVPLITVTNSK. Residues 608 to 629 form a helical membrane-spanning segment; that stretch reads VLLVLFYPVNSCANPFLYAIFT. Topologically, residues 630-701 are cytoplasmic; the sequence is KAFQRDFFLL…VLDKTCYKEC (72 aa). 2 S-palmitoyl cysteine lipidation sites follow: cysteine 645 and cysteine 646.

Belongs to the G-protein coupled receptor 1 family. FSH/LSH/TSH subfamily. Post-translationally, sulfated.

It localises to the cell membrane. Receptor for lutropin-choriogonadotropic hormone. The activity of this receptor is mediated by G proteins which activate adenylate cyclase. This chain is Lutropin-choriogonadotropic hormone receptor (LHCGR), found in Bos taurus (Bovine).